We begin with the raw amino-acid sequence, 211 residues long: Glycerol-3-phosphate acyltransferase 2 (211 aa).

Transmembrane regions (helical) follow at residues 6 to 26 (FASL…VVVG), 57 to 77 (IIVF…PVIF), 82 to 102 (HYLC…PIFL), 124 to 144 (FFLI…MVSL), and 148 to 168 (ISVV…LSII).

This sequence belongs to the PlsY family. As to quaternary structure, probably interacts with PlsX.

Its subcellular location is the cell membrane. It carries out the reaction an acyl phosphate + sn-glycerol 3-phosphate = a 1-acyl-sn-glycero-3-phosphate + phosphate. It functions in the pathway lipid metabolism; phospholipid metabolism. Its function is as follows. Catalyzes the transfer of an acyl group from acyl-phosphate (acyl-PO(4)) to glycerol-3-phosphate (G3P) to form lysophosphatidic acid (LPA). This enzyme utilizes acyl-phosphate as fatty acyl donor, but not acyl-CoA or acyl-ACP. The chain is Glycerol-3-phosphate acyltransferase 2 from Lactobacillus acidophilus (strain ATCC 700396 / NCK56 / N2 / NCFM).